A 335-amino-acid chain; its full sequence is N-acetyl-gamma-glutamyl-phosphate reductase (335 aa).

C156 is a catalytic residue.

It belongs to the NAGSA dehydrogenase family. Type 1 subfamily.

It localises to the cytoplasm. It catalyses the reaction N-acetyl-L-glutamate 5-semialdehyde + phosphate + NADP(+) = N-acetyl-L-glutamyl 5-phosphate + NADPH + H(+). It participates in amino-acid biosynthesis; L-arginine biosynthesis; N(2)-acetyl-L-ornithine from L-glutamate: step 3/4. In terms of biological role, catalyzes the NADPH-dependent reduction of N-acetyl-5-glutamyl phosphate to yield N-acetyl-L-glutamate 5-semialdehyde. This is N-acetyl-gamma-glutamyl-phosphate reductase from Tolumonas auensis (strain DSM 9187 / NBRC 110442 / TA 4).